Reading from the N-terminus, the 703-residue chain is Bifunctional arginine dihydrolase/ornithine cyclodeaminase AgrE (703 aa).

The tract at residues C10–V269 is arginine dihydrolase. Positions 22, 65, 71, 90, and 139 each coordinate L-arginine. N22 is a binding site for L-ornithine. R90, R139, and H168 together coordinate L-ornithine. Catalysis depends on H168, which acts as the Proton donor/acceptor. L-arginine is bound by residues D170 and A258. C264 contributes to the L-ornithine binding site. C264 serves as the catalytic Nucleophile. The segment at S285–L694 is ornithine cyclodeaminase. NAD(+) contacts are provided by N524, A525, D603, S635, M636, L637, H638, D656, D679, and V680.

In the N-terminal section; belongs to the DDAH family. This sequence in the C-terminal section; belongs to the AgrE/ArgZ ornithine cyclodeaminase family. In terms of assembly, homotetramer. Requires NAD(+) as cofactor.

It catalyses the reaction L-arginine + 2 H2O + 2 H(+) = L-ornithine + 2 NH4(+) + CO2. The catalysed reaction is L-ornithine = L-proline + NH4(+). Its activity is regulated as follows. Ornithine cyclodeaminase activity is inhibited by ATP. Functionally, bifunctional enzyme involved in a cyanobacterial arginine utilization pathway that produces glutamate and enables cellular adaptation to nitrogen fluctuations. Catalyzes the hydrolysis of arginine to ornithine, with the release of ammonia and carbon dioxide. Then, catalyzes the conversion of ornithine to proline, with the release of ammonia. This chain is Bifunctional arginine dihydrolase/ornithine cyclodeaminase AgrE, found in Nostoc sp. (strain PCC 7120 / SAG 25.82 / UTEX 2576).